A 125-amino-acid polypeptide reads, in one-letter code: Small ribosomal subunit protein uS12 (125 aa).

Aspartate 89 bears the 3-methylthioaspartic acid mark.

It belongs to the universal ribosomal protein uS12 family. Part of the 30S ribosomal subunit. Contacts proteins S8 and S17. May interact with IF1 in the 30S initiation complex.

Its function is as follows. With S4 and S5 plays an important role in translational accuracy. Functionally, interacts with and stabilizes bases of the 16S rRNA that are involved in tRNA selection in the A site and with the mRNA backbone. Located at the interface of the 30S and 50S subunits, it traverses the body of the 30S subunit contacting proteins on the other side and probably holding the rRNA structure together. The combined cluster of proteins S8, S12 and S17 appears to hold together the shoulder and platform of the 30S subunit. This Wigglesworthia glossinidia brevipalpis protein is Small ribosomal subunit protein uS12.